The chain runs to 485 residues: Cysteine--tRNA ligase (485 aa).

Cys27 contacts Zn(2+). A 'HIGH' region motif is present at residues 29–39 (ITAYDFSHIGH). Residues Cys208, His233, and Glu237 each contribute to the Zn(2+) site. Positions 265-269 (KMSKS) match the 'KMSKS' region motif. Residue Lys268 coordinates ATP.

The protein belongs to the class-I aminoacyl-tRNA synthetase family. As to quaternary structure, monomer. Requires Zn(2+) as cofactor.

The protein localises to the cytoplasm. It catalyses the reaction tRNA(Cys) + L-cysteine + ATP = L-cysteinyl-tRNA(Cys) + AMP + diphosphate. The polypeptide is Cysteine--tRNA ligase (Lawsonia intracellularis (strain PHE/MN1-00)).